The chain runs to 264 residues: MTETSGTFNDIEARLAAVLEEAFEAGTSIYNERGFKRRIGYGNRPAVIHIDLANAWTQPGHPFSCPGMETIIPNVQRINEAARAKGVPVFYTTNVYRNRDASSGTNDMGLWYSKIPTETLPADSYWAQIDDRIAPADGEVVIEKNRASAFPGTNLELFLTSNRIDTLIVTGATAAGCVRHTVEDAIAKGFRPIIPRETIGDRVPGVVQWNLYDIDNKFGDVESTDSVVQYLDALPQFEDTVPKTLSDPQPEVEAPADPVFAEQH.

Cys177 functions as the Nucleophile in the catalytic mechanism. The disordered stretch occupies residues 240 to 264; the sequence is TVPKTLSDPQPEVEAPADPVFAEQH.

As to quaternary structure, homotetramer. The cofactor is sulfate.

It carries out the reaction N-carbamoylsarcosine + H2O + 2 H(+) = sarcosine + NH4(+) + CO2. It functions in the pathway amine and polyamine degradation; creatinine degradation; sarcosine from creatinine: step 3/3. This chain is N-carbamoylsarcosine amidase, found in Arthrobacter sp.